The sequence spans 525 residues: GMP synthase [glutamine-hydrolyzing] (525 aa).

The region spanning 9-207 (RILILDFGSQ…VRDICQCEAL (199 aa)) is the Glutamine amidotransferase type-1 domain. The active-site Nucleophile is cysteine 86. Active-site residues include histidine 181 and glutamate 183. Positions 208 to 400 (WTPAKIIDDA…LGLPYDMLYR (193 aa)) constitute a GMPS ATP-PPase domain. 235 to 241 (SGGVDSS) contacts ATP.

As to quaternary structure, homodimer.

It carries out the reaction XMP + L-glutamine + ATP + H2O = GMP + L-glutamate + AMP + diphosphate + 2 H(+). It functions in the pathway purine metabolism; GMP biosynthesis; GMP from XMP (L-Gln route): step 1/1. In terms of biological role, catalyzes the synthesis of GMP from XMP. This Shigella sonnei (strain Ss046) protein is GMP synthase [glutamine-hydrolyzing].